Reading from the N-terminus, the 594-residue chain is MIQNVGNHLRRGFASMFSNRTSRKSISHPESGDPPTMAEGEGYRNPTEVQMSQLVLPCHTNHRGELSIGQLLKWIDTTACLSAERHAGCPCVTASMDDIYFDHTISVGQVVNIKAKVNRAFNSSMEVGIQVVSEDLCSEKQWSVCKALATFVAHRELSKVKLKQVIPLTEEEKTEHGVAAERRRMRLVYADTIKDLLTHCVIQDDLDKDCSNMVPAEKTRVESVELVLPPHANHQGNTFGGQIMAWMENVATIAASRLCHAHPTLKAIEMFHFRGPSQVGDRLVLKAIVNNAFKHSMEVGVCVEAYRQEAETQRRHINSAFMTFVVLDKDDQPQKLPWIRPQPGEGERRYREASARKKIRLDRKYLVSCKQAEVALSVPWDPSNQVYLSYYNVSSLKTLMAKDNWVLSVEISEVRLYILEEDFLSFHLEMVVNVDAAQVFQLLSDLRRRPEWDKHYRSVELVQQVDEDDAIYHVISPALSGNTKPQDFVILASRRKPCDNGDPYVIALRSVTLPTHHETPEYQRGETLCSGFCLWREGDQMTKVSYYNQATPGFLNYVTTNVSGLSSEFYNTFKACESFLLDNRNDLAPSLQTL.

The N-terminal 20 residues, 1–20, are a transit peptide targeting the mitochondrion; the sequence is MIQNVGNHLRRGFASMFSNR. Residues Ser-15 and Ser-25 each carry the phosphoserine modification. The tract at residues 20–43 is disordered; it reads RTSRKSISHPESGDPPTMAEGEGY. One can recognise a HotDog ACOT-type 1 domain in the interval 45-157; the sequence is NPTEVQMSQL…LATFVAHREL (113 aa). Residues 93-95, 122-124, Arg-183, and 272-274 each bind CoA; these read TAS, NSS, and HFR. Residues 217 to 330 form the HotDog ACOT-type 2 domain; it reads EKTRVESVEL…FMTFVVLDKD (114 aa). The region spanning 370 to 582 is the START domain; sequence KQAEVALSVP…FKACESFLLD (213 aa).

It localises to the mitochondrion matrix. Its subcellular location is the cytoplasm. It catalyses the reaction hexadecanoyl-CoA + H2O = hexadecanoate + CoA + H(+). The catalysed reaction is tetradecanoyl-CoA + H2O = tetradecanoate + CoA + H(+). The enzyme catalyses dodecanoyl-CoA + H2O = dodecanoate + CoA + H(+). It carries out the reaction butanoyl-CoA + H2O = butanoate + CoA + H(+). Its pathway is lipid metabolism; fatty acid metabolism. Its function is as follows. Has an acyl-CoA thioesterase activity with a preference for the long chain fatty acyl-CoA thioesters hexadecanoyl-CoA/palmitoyl-CoA and tetradecanoyl-CoA/myristoyl-CoA which are the main substrates in the mitochondrial beta-oxidation pathway. The protein is Acyl-coenzyme A thioesterase 11 (Acot11) of Mus musculus (Mouse).